A 2204-amino-acid polypeptide reads, in one-letter code: Non-reducing polyketide synthase CTB1 (2204 aa).

The N-terminal acylcarrier protein transacylase domain (SAT) stretch occupies residues 11-250 (AFGDQTYDCS…TRLPITAPYH (240 aa)). The Ketosynthase family 3 (KS3) domain occupies 382 to 815 (KSPIAILAAS…GGNTCLVLED (434 aa)). Catalysis depends on for beta-ketoacyl synthase activity residues C554, H689, and H734. The tract at residues 923 to 1224 (AFTGQGSAFE…QTFASINKDK (302 aa)) is malonyl-CoA:ACP transacylase (MAT) domain. A product template (PT) domain region spans residues 1299-1619 (SSSIHKVITN…VPKRLMHYIV (321 aa)). The tract at residues 1303–1439 (HKVITNTITA…CKIRFGSLEK (137 aa)) is N-terminal hotdog fold. One can recognise a PKS/mFAS DH domain in the interval 1303–1616 (HKVITNTITA…LQGVPKRLMH (314 aa)). Catalysis depends on H1336, which acts as the Proton acceptor; for dehydratase activity. The tract at residues 1468–1616 (TYRFSKGMIY…LQGVPKRLMH (149 aa)) is C-terminal hotdog fold. D1528 serves as the catalytic Proton donor; for dehydratase activity. A disordered region spans residues 1625-1674 (KASGPPTEKKGSSPPVEKKASAPVAPTRPAIQRKNASIPPPATQVTPQNK). Over residues 1631–1644 (TEKKGSSPPVEKKA) the composition is skewed to basic and acidic residues. Carrier domains lie at 1679–1756 (PSVS…TRLS) and 1783–1865 (DPSP…SGST). An O-(pantetheine 4'-phosphoryl)serine mark is found at S1716 and S1824. Positions 1864–1875 (STESFDSTTTKP) are enriched in polar residues. The interval 1864–1931 (STESFDSTTT…PPKGRIPPAW (68 aa)) is disordered. Residues 1880–1895 (ATPPLTDSSASSPPSS) show a composition bias toward low complexity. Residues 1945–2195 (ILFLFPDGAG…SGAQMLVEHM (251 aa)) are thioesterase (TE) domain.

Pantetheine 4'-phosphate serves as cofactor.

It catalyses the reaction 6 malonyl-CoA + acetyl-CoA + 6 H(+) = nor-toralactone + 6 CO2 + 7 CoA + 2 H2O. It participates in mycotoxin biosynthesis. In terms of biological role, polyketide synthase; part of the gene cluster that mediates the biosynthesis of cercosporin, a light-activated, non-host-selective toxin. The perylenequinone chromophore of cercosporin absorbs light energy to attain an electronically-activated triplet state and produces active oxygen species such as the hydroxyl radical, superoxide, hydrogen peroxide or singlet oxygen upon reaction with oxygen molecules. These reactive oxygen species cause damage to various cellular components including lipids, proteins and nucleic acids. The first step of cercosporin biosynthesis is performed by the polyketide synthase CTB1 which catalyzes the formation of nor-toralactone. The starter unit acyltransferase (SAT) domain of CTB1 initiates polyketide extension by the selective utilization of acetyl-CoA, which is elongated to the heptaketide in the beta-ketoacyl synthase (KS) domain by successive condensations with six malonyl units introduced by the malonyl acyltransferase (MAT) domain. The product template (PT) domain catalyzes C4-C9 and C2-C11 aldol cyclizations and dehydrations to a trihydroxynaphthalene, which is thought to be delivered to the thioesterase (TE) domain for product release. The bifunctional enzyme CTB3 then methylates nor-toralactone to toralactone before conducting an unusual oxidative aromatic ring opening. The O-methyltransferase CTB2 further methylates the nascent OH-6 of the CBT3 product, blocking further oxidation at this site before the reductase CTB6 reduces the 2-oxopropyl ketone at position C7, giving naphthalene. The FAD-dependent monooxygenase CTB5 in concert with the multicopper oxidase CTB12 are responsible for homodimerization of naphthalene with CTB7 installing the dioxepine moiety, finally producing cercosporin. The fasciclin domain-containing protein CTB11 might act with CTB5 and CTB12 whereas the roles of CTB9 and CTB10 have still to be elucidated. The polypeptide is Non-reducing polyketide synthase CTB1 (Cercospora beticola (Sugarbeet leaf spot fungus)).